Consider the following 597-residue polypeptide: Elongation factor 4 (597 aa).

One can recognise a tr-type G domain in the interval lysine 2–valine 184. GTP contacts are provided by residues aspartate 14 to threonine 19 and asparagine 131 to aspartate 134.

Belongs to the TRAFAC class translation factor GTPase superfamily. Classic translation factor GTPase family. LepA subfamily.

It localises to the cell inner membrane. The catalysed reaction is GTP + H2O = GDP + phosphate + H(+). Its function is as follows. Required for accurate and efficient protein synthesis under certain stress conditions. May act as a fidelity factor of the translation reaction, by catalyzing a one-codon backward translocation of tRNAs on improperly translocated ribosomes. Back-translocation proceeds from a post-translocation (POST) complex to a pre-translocation (PRE) complex, thus giving elongation factor G a second chance to translocate the tRNAs correctly. Binds to ribosomes in a GTP-dependent manner. This is Elongation factor 4 from Aeromonas salmonicida (strain A449).